Reading from the N-terminus, the 342-residue chain is Photosystem II assembly lipoprotein Ycf48 (342 aa).

Positions methionine 1–serine 28 are cleaved as a signal peptide. Cysteine 29 carries N-palmitoyl cysteine lipidation. Cysteine 29 carries S-diacylglycerol cysteine lipidation. The Arg-rich patch motif lies at arginine 196–arginine 220. Positions methionine 340–proline 342 are excised as a propeptide.

The protein belongs to the Ycf48 family. As to quaternary structure, part of early PSII assembly complexes which includes D1 (psbA) and PsbI; not found in mature PSII. By two-hybrid analysis in yeast interacts with precursor and intermediate forms of D1, but less with mature D1. Binds to the lumenal side of PSI and PSII complexes. Coimmunoprecipitates with YidC. Purified chlorophyll- and carotenoid-containing photosystem II (PSII) assembly intermediate complex RCII* (iD1, D1, D2, PsbE, PsbF, PsbI, Ycf39, Ycf48, HliC and HliD). In terms of processing, the last 3 residues are removed in the mature protein.

The protein localises to the cellular thylakoid membrane. Functionally, a factor required for optimal assembly of photosystem II (PSII) which acts in the early stages of PSII assembly. Also plays a role in replacement of photodamaged D1 (psbA). May interact with precursor D1 to prevent its premature processing before association with D2 (psbD). May also play a role in chlorophyll insertion into chlorophyll-binding proteins. Increasing levels of chlorophyll precursors partially suppresses deletion of this protein, supporting the idea that Ycf48 assists YidC in synthesis of chlorophyll-binding proteins. The Ycf39-Hlip complex binds D1 at an early stage of PSII assembly along with Ycf48, ribosomes and ChlG, the last enzyme in chlorophyll biosynthesis; it may be involved in chlorophyll reuse and delivery to D1 in the initial stages of PSII assembly. The polypeptide is Photosystem II assembly lipoprotein Ycf48 (Synechocystis sp. (strain ATCC 27184 / PCC 6803 / Kazusa)).